We begin with the raw amino-acid sequence, 235 residues long: Sugar fermentation stimulation protein homolog (235 aa).

It belongs to the SfsA family.

The protein is Sugar fermentation stimulation protein homolog of Pseudomonas aeruginosa (strain ATCC 15692 / DSM 22644 / CIP 104116 / JCM 14847 / LMG 12228 / 1C / PRS 101 / PAO1).